The primary structure comprises 435 residues: Zinc finger CCCH domain-containing protein 16 (435 aa).

The C3H1-type zinc-finger motif lies at methionine 1 to glutamine 27. The 6 X 2 AA repeats of F-G stretch occupies residues arginine 2–alanine 88. 2 disordered regions span residues proline 25 to cysteine 105 and threonine 205 to asparagine 374. Tandem repeats lie at residues phenylalanine 34 to glycine 35 and phenylalanine 36 to glycine 37. Over residues glutamine 39–asparagine 51 the composition is skewed to low complexity. A run of 2 repeats spans residues phenylalanine 56 to glycine 57 and phenylalanine 58 to glycine 59. Positions glycine 63 to arginine 77 are enriched in polar residues. Low complexity predominate over residues threonine 78–glutamine 99. 2 stretches are compositionally biased toward polar residues: residues threonine 205–proline 320 and serine 328–lysine 339. 2 repeat units span residues phenylalanine 343–glycine 344 and phenylalanine 359–glycine 360. The span at threonine 351–asparagine 374 shows a compositional bias: polar residues.

Part of the nuclear pore complex (NPC). The NPC has an eight-fold symmetrical structure comprising a central transport channel and two rings, the cytoplasmic and nuclear rings, to which eight filaments are attached. The cytoplasmic filaments have loose ends, while the nuclear filaments are joined in a distal ring, forming a nuclear basket. NPCs are highly dynamic in configuration and composition, and can be devided in 3 subcomplexes, the NUP62 subcomplex, the NUP107-160 subcomplex and the NUP93 subcomplex, containing approximately 30 different nucleoporin proteins.

The protein resides in the nucleus envelope. The protein localises to the nucleus. It localises to the nuclear pore complex. The sequence is that of Zinc finger CCCH domain-containing protein 16 from Arabidopsis thaliana (Mouse-ear cress).